Consider the following 448-residue polypeptide: MTKEKKHYICSNCGNTSPKWSGQCFDCGVWGSIIEEKVISNKNIAKIGSKQDFEQLSSNVTDQVRISTPIGELDRVLGGGLVLGSAILIGGDPGIGKSTLLLQLVAGSFASKVKCLYITGEESLDQIKLRALRLDLVNDKTNILAANNLEDIIASLEANKGNIDLVVIDSIQTIATRELTSPPGTVSQIRTCAHELVNYAKQNNIIILLSCHVTKDGQLAGPKLLEHLVDTVLYFEGDHNNHFRILRSYKNRFGGVGEIGVFEMSSSGLIEVTNPSELFLMKREQNVIGTAIFAGIEGSRPLLMEVQALIVPSNMVTPRRSAVGWDVNRLSMILAVLSSRIGLNLANYEVYLSIAGGLKINEPASDLAVAASLISAATNKPLPEHSVFFGEISLSGEIRKTAKAEARIKEALKLGFNNIICSKSENLTHDFISSIAHLKDLKLLLGSS.

Residues 10-27 (CSNCGNTSPKWSGQCFDC) form a C4-type zinc finger. 91-98 (GDPGIGKS) contacts ATP. A RadA KNRFG motif motif is present at residues 250-254 (KNRFG). Positions 349–448 (EVYLSIAGGL…KDLKLLLGSS (100 aa)) are lon-protease-like.

It belongs to the RecA family. RadA subfamily.

In terms of biological role, DNA-dependent ATPase involved in processing of recombination intermediates, plays a role in repairing DNA breaks. Stimulates the branch migration of RecA-mediated strand transfer reactions, allowing the 3' invading strand to extend heteroduplex DNA faster. Binds ssDNA in the presence of ADP but not other nucleotides, has ATPase activity that is stimulated by ssDNA and various branched DNA structures, but inhibited by SSB. Does not have RecA's homology-searching function. In Rickettsia bellii (strain RML369-C), this protein is DNA repair protein RadA.